An 806-amino-acid chain; its full sequence is Acetyl-CoA decarbonylase/synthase complex subunit alpha 1 (806 aa).

[4Fe-4S] cluster is bound by residues cysteine 73, cysteine 76, cysteine 77, cysteine 79, cysteine 84, and cysteine 94. Histidine 117 is a binding site for CO. Histidine 250, cysteine 278, and cysteine 323 together coordinate [Ni-4Fe-4S] cluster. 4Fe-4S ferredoxin-type domains follow at residues 407–436 and 445–475; these read DEQMKEWVDKCADCGSCYLVCPEELEIPEA and YSYLVDLHDQCIGCRRCEQVCKKEIPILSVI. Residues cysteine 417, cysteine 420, cysteine 423, cysteine 427, cysteine 455, cysteine 458, cysteine 461, and cysteine 465 each coordinate [4Fe-4S] cluster. 3 residues coordinate [Ni-4Fe-4S] cluster: cysteine 523, cysteine 552, and cysteine 587.

It belongs to the Ni-containing carbon monoxide dehydrogenase family. As to quaternary structure, heterotetramer of two alpha and two epsilon subunits. The ACDS complex is made up of alpha, epsilon, beta, gamma and delta subunits with a probable stoichiometry of (alpha(2)epsilon(2))(4)-beta(8)-(gamma(1)delta(1))(8). [4Fe-4S] cluster is required as a cofactor. It depends on [Ni-4Fe-4S] cluster as a cofactor.

It catalyses the reaction CO + 2 oxidized [2Fe-2S]-[ferredoxin] + H2O = 2 reduced [2Fe-2S]-[ferredoxin] + CO2 + 2 H(+). Its pathway is one-carbon metabolism; methanogenesis from acetate. In terms of biological role, part of the ACDS complex that catalyzes the reversible cleavage of acetyl-CoA, allowing growth on acetate as sole source of carbon and energy. The alpha-epsilon subcomponent functions as a carbon monoxide dehydrogenase. This is Acetyl-CoA decarbonylase/synthase complex subunit alpha 1 from Methanosarcina thermophila.